The sequence spans 1107 residues: Polyphosphatidylinositol phosphatase INP53 (1107 aa).

Positions 142-482 constitute an SAC domain; sequence LKKLLSNGSF…GDQISQIYTG (341 aa). At serine 497 the chain carries Phosphoserine. The segment at 926 to 1107 is disordered; the sequence is TASSVASSSP…LDSWQPLTPK (182 aa). A compositionally biased stretch (low complexity) spans 927-942; it reads ASSVASSSPVSSASAS. Positions 943 to 956 are enriched in polar residues; it reads LQPVRTQNSSQSRT. Serine 986 is subject to Phosphoserine. Polar residues-rich tracts occupy residues 987–1005, 1020–1038, 1045–1063, and 1097–1107; these read PTPQ…NIQE, FSQN…SPMS, NSAS…QTPT, and TLDSWQPLTPK. Serine 1035 bears the Phosphoserine mark. Phosphothreonine is present on threonine 1105.

Belongs to the synaptojanin family. It in the central section; belongs to the inositol 1,4,5-trisphosphate 5-phosphatase family. In terms of assembly, interacts (via SAC domain) with BSP1; the interaction is direct. Interacts with CHC1.

The protein resides in the cytoplasm. The catalysed reaction is a 1,2-diacyl-sn-glycero-3-phospho-(1D-myo-inositol-4,5-bisphosphate) + H2O = a 1,2-diacyl-sn-glycero-3-phospho-(1D-myo-inositol 4-phosphate) + phosphate. In terms of biological role, dephosphorylates a number of phosphatidylinositols (PIs) like phosphatidylinositol 4,5-bisphosphate (PtdIns(4,5)P2), but also phosphatidylinositol 3-phosphate (PtdIns(3)P), phosphatidylinositol 4-phosphate (PtdIns(4)P), and phosphatidylinositol 3,5-bisphosphate (PtdIns(3,5)P2). Controls the cellular levels and subcellular distribution of phosphatidylinositol 3-phosphate and phosphatidylinositol 4,5-bisphosphate. Plays an essential role in a TGN (trans Golgi network)-to-early endosome pathway. Involved in clathrin-mediated protein sorting at the TGN. The polypeptide is Polyphosphatidylinositol phosphatase INP53 (INP53) (Saccharomyces cerevisiae (strain ATCC 204508 / S288c) (Baker's yeast)).